A 342-amino-acid chain; its full sequence is N-acetyl-gamma-glutamyl-phosphate reductase (342 aa).

The active site involves C149.

The protein belongs to the NAGSA dehydrogenase family. Type 1 subfamily.

The protein resides in the cytoplasm. It carries out the reaction N-acetyl-L-glutamate 5-semialdehyde + phosphate + NADP(+) = N-acetyl-L-glutamyl 5-phosphate + NADPH + H(+). It participates in amino-acid biosynthesis; L-arginine biosynthesis; N(2)-acetyl-L-ornithine from L-glutamate: step 3/4. Functionally, catalyzes the NADPH-dependent reduction of N-acetyl-5-glutamyl phosphate to yield N-acetyl-L-glutamate 5-semialdehyde. This Paracoccus denitrificans (strain Pd 1222) protein is N-acetyl-gamma-glutamyl-phosphate reductase.